A 27-amino-acid polypeptide reads, in one-letter code: Delta-conotoxin SuVIA (27 aa).

3 disulfides stabilise this stretch: C1-C17, C8-C21, and C16-C25.

Belongs to the conotoxin O1 superfamily. Expressed by the venom duct, in the proximal part (indicative of a defensive role).

It localises to the secreted. Functionally, this toxin activates voltage-gated sodium channels (Nav1.3/SCN3A (EC(50)=3.98 nM), Nav1.4/SCN4A (EC(50)=4.99 nM), Nav1.6/SCN8A (EC(50)=1.27 nM) and Nav1.7/SCN9A (EC(50)=2.42 nM)). It shifts the voltage-dependence of activation to more hyperpolarized potentials but has only little effect on channel inactivation. In vivo, it induces nocifensive or pain-like behaviors in mice when injected intraplantarly. This is coherent with the specific defensive role deduced from its proximal position in the venom gland. The polypeptide is Delta-conotoxin SuVIA (Conus suturatus (Sutured cone)).